A 255-amino-acid polypeptide reads, in one-letter code: MTGELTLLPAVDVQGGRAVQLQQGVASSERAFGDPLDVAQKWQGLGAQWIHLVDLDAAFGHGSNTKIISSVVEQLDINVEVSGGIRDQRSLESALSAGATRVNIGTAALEDPQWCDEVVGRYGEQVAIGLDVRGDQLAARGWTREGGKVLDVLARLEDAGCRRYVVTDVASDGMLTGPNYELLGRICARTQGKVVASGGIAALEDLRRLRGLVPIGVEGAIVGTALYVGNFTLPAALDVCRAPIPADSSPMPPTD.

Asp-12 serves as the catalytic Proton acceptor. Catalysis depends on Asp-131, which acts as the Proton donor.

Belongs to the HisA/HisF family.

The protein localises to the cytoplasm. The catalysed reaction is 1-(5-phospho-beta-D-ribosyl)-5-[(5-phospho-beta-D-ribosylamino)methylideneamino]imidazole-4-carboxamide = 5-[(5-phospho-1-deoxy-D-ribulos-1-ylimino)methylamino]-1-(5-phospho-beta-D-ribosyl)imidazole-4-carboxamide. Its pathway is amino-acid biosynthesis; L-histidine biosynthesis; L-histidine from 5-phospho-alpha-D-ribose 1-diphosphate: step 4/9. The chain is 1-(5-phosphoribosyl)-5-[(5-phosphoribosylamino)methylideneamino] imidazole-4-carboxamide isomerase from Cutibacterium acnes (strain DSM 16379 / KPA171202) (Propionibacterium acnes).